The sequence spans 183 residues: Capsid protein (183 aa).

The segment at 136 to 183 (NAPILSTLPETTVVRRRGRSPRRRTPSPRRRRSQSPRRRRSQSRESQC) is disordered. Over residues 149–176 (VRRRGRSPRRRTPSPRRRRSQSPRRRRS) the composition is skewed to basic residues. Residues S155, S162, and S170 each carry the phosphoserine; by host modification. One copy of the 1; half-length repeat lies at 155-161 (SPRRRTP). The tract at residues 155-177 (SPRRRTPSPRRRRSQSPRRRRSQ) is 3 X 8 AA repeats of S-P-R-R-R-[PR]-S-Q. A Bipartite nuclear localization signal motif is present at residues 158–175 (RRTPSPRRRRSQSPRRRR). A run of 2 repeats spans residues 162–169 (SPRRRRSQ) and 170–177 (SPRRRRSQ). Positions 177-183 (QSRESQC) are RNA binding.

It belongs to the orthohepadnavirus core antigen family. As to quaternary structure, homodimerizes, then multimerizes. Interacts with cytosol exposed regions of viral L glycoprotein present in the reticulum-to-Golgi compartment. Interacts with human FLNB. Phosphorylated form interacts with host importin alpha; this interaction depends on the exposure of the NLS, which itself depends upon genome maturation and/or phosphorylation of the capsid protein. Interacts with host NUP153. Post-translationally, phosphorylated by host SRPK1, SRPK2, and maybe protein kinase C or GAPDH. Phosphorylation is critical for pregenomic RNA packaging. Protein kinase C phosphorylation is stimulated by HBx protein and may play a role in transport of the viral genome to the nucleus at the late step during the viral replication cycle.

The protein localises to the virion. Its subcellular location is the host cytoplasm. In terms of biological role, self assembles to form an icosahedral capsid. Most capsids appear to be large particles with an icosahedral symmetry of T=4 and consist of 240 copies of capsid protein, though a fraction forms smaller T=3 particles consisting of 180 capsid proteins. Entering capsids are transported along microtubules to the nucleus. Phosphorylation of the capsid is thought to induce exposure of nuclear localization signal in the C-terminal portion of the capsid protein that allows binding to the nuclear pore complex via the importin (karyopherin-) alpha and beta. Capsids are imported in intact form through the nuclear pore into the nuclear basket, where it probably binds NUP153. Only capsids that contain the mature viral genome can release the viral DNA and capsid protein into the nucleoplasm. Immature capsids get stuck in the basket. Capsids encapsulate the pre-genomic RNA and the P protein. Pre-genomic RNA is reverse-transcribed into DNA while the capsid is still in the cytoplasm. The capsid can then either be directed to the nucleus, providing more genomes for transcription, or bud through the endoplasmic reticulum to provide new virions. The protein is Capsid protein of Homo sapiens (Human).